Here is a 240-residue protein sequence, read N- to C-terminus: Probable transcriptional regulatory protein HP_0162 (240 aa).

It belongs to the TACO1 family.

The protein resides in the cytoplasm. In Helicobacter pylori (strain ATCC 700392 / 26695) (Campylobacter pylori), this protein is Probable transcriptional regulatory protein HP_0162.